Here is a 575-residue protein sequence, read N- to C-terminus: Sulfite reductase [NADPH] hemoprotein beta-component (575 aa).

Residues cysteine 439, cysteine 445, cysteine 484, and cysteine 488 each contribute to the [4Fe-4S] cluster site. Cysteine 488 is a binding site for siroheme.

This sequence belongs to the nitrite and sulfite reductase 4Fe-4S domain family. As to quaternary structure, alpha(8)-beta(8). The alpha component is a flavoprotein, the beta component is a hemoprotein. The cofactor is siroheme. Requires [4Fe-4S] cluster as cofactor.

It carries out the reaction hydrogen sulfide + 3 NADP(+) + 3 H2O = sulfite + 3 NADPH + 4 H(+). Its pathway is sulfur metabolism; hydrogen sulfide biosynthesis; hydrogen sulfide from sulfite (NADPH route): step 1/1. In terms of biological role, component of the sulfite reductase complex that catalyzes the 6-electron reduction of sulfite to sulfide. This is one of several activities required for the biosynthesis of L-cysteine from sulfate. The chain is Sulfite reductase [NADPH] hemoprotein beta-component from Blochmanniella pennsylvanica (strain BPEN).